The chain runs to 342 residues: Terpene cyclase resF (342 aa).

5 helical membrane passes run 5-25 (VSVV…GVFA), 81-101 (FMAQ…TEDF), 115-135 (WGVF…GVCF), 151-171 (STWI…MLIF), and 182-202 (IWGV…ASLL). Asparagine 224 is a glycosylation site (N-linked (GlcNAc...) asparagine). 3 helical membrane-spanning segments follow: residues 229–249 (YVVA…FHLG), 269–289 (FLQI…WHEL), and 305–325 (YLLL…AWAL).

This sequence belongs to the membrane-bound ascI terpene cyclase family.

It localises to the membrane. It functions in the pathway antifungal biosynthesis. Cyclase; part of the gene cluster that mediates the biosynthesis of the tetrahydropyranyl antifungal agent restricticin that acts as an inhibitor of CYP51 and blocks the ergosterol biosynthesis. The highly reducing polyketide synthase resH, the short chain dehydrogenase resG, the cyclase resF, the FAD-dependent monooxygenase resA and the enoylreductase resD are required to generate the first stable intermediate desmethylrestrictinol. ResH with resD biosynthesize the first polyketide chain intermediate that is reduced by resG, followed by epoxidation by resA before 6-endo cyclization via epoxide opening by resF leads to desmethylrestrictinol. The methyltransferase resE then catalyzes the C4 O-methylation of desmethylrestrictinol to produce restrictinol, and the nonribosomal peptide synthetase resC catalyzes the C3 esterification of restrictinol with glycine that leads to restricticin. The sequence is that of Terpene cyclase resF from Aspergillus sclerotiorum.